A 90-amino-acid chain; its full sequence is Probable Fe(2+)-trafficking protein (90 aa).

Belongs to the Fe(2+)-trafficking protein family.

Its function is as follows. Could be a mediator in iron transactions between iron acquisition and iron-requiring processes, such as synthesis and/or repair of Fe-S clusters in biosynthetic enzymes. The sequence is that of Probable Fe(2+)-trafficking protein from Pseudomonas putida (strain ATCC 700007 / DSM 6899 / JCM 31910 / BCRC 17059 / LMG 24140 / F1).